We begin with the raw amino-acid sequence, 1068 residues long: Leucine zipper protein 1 (1068 aa).

Ala2 is modified (N-acetylalanine). Residues Ala11–Leu354 are a coiled coil. Disordered stretches follow at residues Leu251–Leu292, Thr375–Arg402, and Ala432–Glu558. Residues Lys254–Leu292 are compositionally biased toward basic and acidic residues. Phosphoserine is present on residues Ser256, Ser261, Ser395, Ser513, Ser571, Ser575, Ser612, and Ser660. The span at Arg510–Ser519 shows a compositional bias: polar residues. The segment at Thr677 to Gly700 is disordered. At Thr680 the chain carries Phosphothreonine. Phosphoserine is present on residues Ser691 and Ser746. The segment at Gln782 to Pro829 is disordered. Over residues Thr785–Ser796 the composition is skewed to low complexity. Residues Ala834–Pro884 form a required for interaction with FLNA region. Position 906 is a phosphoserine (Ser906). The segment at Arg924–Ala945 is disordered. Thr952 bears the Phosphothreonine mark. Disordered regions lie at residues Gln959–Val995 and Asn1033–Asp1068. Polar residues predominate over residues Arg984 to Glu994. Position 988 is a phosphoserine (Ser988).

In terms of assembly, component of the CERF-1 ISWI chromatin remodeling complex (also called the CECR2-containing remodeling factor (CERF) complex) at least composed of CECR2 and SMARCA1. Component of the CERF-5 ISWI chromatin remodeling complex at least composed of CECR2 and SMARCA5/SNF2H. LUZP1 is detected as part of the CERF-1 and CERF-5 complexes in embryonic stem (ES) cells where it is involved in complex stabilization but is not detected in the complexes in the testis. Interacts (via C-terminus) with LIMA1/EPLIN; both proteins restrict ciliation and may work together to regulate this process. Interacts with myosin light chain MYL9; the interaction results in inhibition of phosphorylation of MYL9 by DAPK3. Interacts with DAPK3; the interaction is likely to occur throughout the cell cycle and reduces the LUZP1-mediated suppression of MYL9 phosphorylation. Interacts with the chromosomal passenger complex (CPC); CPC kinase activity is required for localization of LUZP1 to the centromere. Predominantly expressed in the brain (at protein level).

The protein localises to the cytoplasm. Its subcellular location is the cytoskeleton. It localises to the microtubule organizing center. It is found in the centrosome. The protein resides in the cilium basal body. The protein localises to the midbody. Its subcellular location is the chromosome. It localises to the centromere. It is found in the spindle. The protein resides in the stress fiber. The protein localises to the nucleus. Its subcellular location is the cell projection. It localises to the dendrite. It is found in the perikaryon. The protein resides in the cell junction. The protein localises to the tight junction. Its function is as follows. F-actin cross-linking protein. Stabilizes actin and acts as a negative regulator of primary cilium formation. Positively regulates the phosphorylation of both myosin II and protein phosphatase 1 regulatory subunit PPP1R12A/MYPT1 and promotes the assembly of myosin II stacks within actin stress fibers. Inhibits the phosphorylation of myosin light chain MYL9 by DAPK3 and suppresses the constriction velocity of the contractile ring during cytokinesis. Binds to microtubules and promotes epithelial cell apical constriction by up-regulating levels of diphosphorylated myosin light chain (MLC) through microtubule-dependent inhibition of MLC dephosphorylation by myosin phosphatase. Involved in regulation of cell migration, nuclear size and centriole number, probably through regulation of the actin cytoskeleton. Component of the CERF-1 and CERF-5 chromatin remodeling complexes in embryonic stem cells where it acts to stabilize the complexes. Plays a role in embryonic brain and cardiovascular development. In Mus musculus (Mouse), this protein is Leucine zipper protein 1 (Luzp1).